Reading from the N-terminus, the 160-residue chain is uncharacterized protein (160 aa).

To A.fulgidus AF1717.

This is an uncharacterized protein from Bacillus subtilis (strain 168).